The primary structure comprises 259 residues: 3-dehydroquinate dehydratase (259 aa).

Residues 50-52 (EWR) and Arg86 contribute to the 3-dehydroquinate site. The Proton donor/acceptor role is filled by His147. Lys174 functions as the Schiff-base intermediate with substrate in the catalytic mechanism. Arg216, Ser235, and Gln239 together coordinate 3-dehydroquinate.

The protein belongs to the type-I 3-dehydroquinase family. In terms of assembly, homodimer.

The catalysed reaction is 3-dehydroquinate = 3-dehydroshikimate + H2O. It participates in metabolic intermediate biosynthesis; chorismate biosynthesis; chorismate from D-erythrose 4-phosphate and phosphoenolpyruvate: step 3/7. Functionally, involved in the third step of the chorismate pathway, which leads to the biosynthesis of aromatic amino acids. Catalyzes the cis-dehydration of 3-dehydroquinate (DHQ) and introduces the first double bond of the aromatic ring to yield 3-dehydroshikimate. This is 3-dehydroquinate dehydratase from Geobacillus sp. (strain WCH70).